A 399-amino-acid chain; its full sequence is S-adenosylmethionine synthase (399 aa).

H16 lines the ATP pocket. D18 provides a ligand contact to Mg(2+). Position 44 (E44) interacts with K(+). Residues E57 and Q100 each coordinate L-methionine. A flexible loop region spans residues 100-110 (QSPDIAQGVDT). ATP-binding positions include 175-177 (DGK), 246-247 (KF), D255, 261-262 (RK), A278, and K282. D255 is an L-methionine binding site. K286 provides a ligand contact to L-methionine. An Isoglutamyl lysine isopeptide (Lys-Gln) (interchain with Q-Cter in protein Pup) cross-link involves residue K341.

This sequence belongs to the AdoMet synthase family. Homotetramer; dimer of dimers. It depends on Mg(2+) as a cofactor. K(+) is required as a cofactor.

Its subcellular location is the cytoplasm. It carries out the reaction L-methionine + ATP + H2O = S-adenosyl-L-methionine + phosphate + diphosphate. It functions in the pathway amino-acid biosynthesis; S-adenosyl-L-methionine biosynthesis; S-adenosyl-L-methionine from L-methionine: step 1/1. Catalyzes the formation of S-adenosylmethionine (AdoMet) from methionine and ATP. The overall synthetic reaction is composed of two sequential steps, AdoMet formation and the subsequent tripolyphosphate hydrolysis which occurs prior to release of AdoMet from the enzyme. The chain is S-adenosylmethionine synthase from Mycolicibacterium smegmatis (strain ATCC 700084 / mc(2)155) (Mycobacterium smegmatis).